The sequence spans 257 residues: Alcohol dehydrogenase 1 (257 aa).

NAD(+) is bound at residue 9–33 (VFVGGLGFIGYEACKTLITRDLASL). Residue Ser137 participates in substrate binding. The Proton acceptor role is filled by Tyr150.

This sequence belongs to the short-chain dehydrogenases/reductases (SDR) family. As to quaternary structure, homodimer.

The enzyme catalyses a primary alcohol + NAD(+) = an aldehyde + NADH + H(+). It carries out the reaction a secondary alcohol + NAD(+) = a ketone + NADH + H(+). The protein is Alcohol dehydrogenase 1 (ADH1) of Ceratitis cosyra (Mango fruit fly).